Consider the following 90-residue polypeptide: Secretoglobin family 1D member 2 (90 aa).

An N-terminal signal peptide occupies residues 1 to 21 (MKLSVCLLLVTLALCCYQANA).

It belongs to the secretoglobin family. Lipophilin subfamily. Highest expression was found in skeletal muscle. Expressed as well in thymus, trachea, kidney, steroid responsive tissues (prostate, testis, uterus, breast and ovary) and salivary gland.

It is found in the secreted. Functionally, may bind androgens and other steroids, may also bind estramustine, a chemotherapeutic agent used for prostate cancer. May be under transcriptional regulation of steroid hormones. The sequence is that of Secretoglobin family 1D member 2 (SCGB1D2) from Homo sapiens (Human).